A 125-amino-acid polypeptide reads, in one-letter code: Glutamyl-tRNA(Gln) amidotransferase subunit C, mitochondrial (125 aa).

It belongs to the GatC family. As to quaternary structure, subunit of the heterotrimeric GatCAB amidotransferase (AdT) complex, composed of A, B and C subunits.

Its subcellular location is the mitochondrion. It catalyses the reaction L-glutamyl-tRNA(Gln) + L-glutamine + ATP + H2O = L-glutaminyl-tRNA(Gln) + L-glutamate + ADP + phosphate + H(+). Its function is as follows. Allows the formation of correctly charged Gln-tRNA(Gln) through the transamidation of misacylated Glu-tRNA(Gln) in the mitochondria. The reaction takes place in the presence of glutamine and ATP through an activated gamma-phospho-Glu-tRNA(Gln). The chain is Glutamyl-tRNA(Gln) amidotransferase subunit C, mitochondrial from Drosophila mojavensis (Fruit fly).